Reading from the N-terminus, the 229-residue chain is Orotate phosphoribosyltransferase (229 aa).

5-phospho-alpha-D-ribose 1-diphosphate-binding positions include arginine 107, lysine 108, lysine 111, histidine 113, and 133–141; that span reads EDLTTAGGS. Orotate is bound at residue threonine 137.

The protein belongs to the purine/pyrimidine phosphoribosyltransferase family. PyrE subfamily. As to quaternary structure, homodimer. Requires Mg(2+) as cofactor.

It catalyses the reaction orotidine 5'-phosphate + diphosphate = orotate + 5-phospho-alpha-D-ribose 1-diphosphate. The protein operates within pyrimidine metabolism; UMP biosynthesis via de novo pathway; UMP from orotate: step 1/2. Its function is as follows. Catalyzes the transfer of a ribosyl phosphate group from 5-phosphoribose 1-diphosphate to orotate, leading to the formation of orotidine monophosphate (OMP). The chain is Orotate phosphoribosyltransferase from Rhizobium etli (strain ATCC 51251 / DSM 11541 / JCM 21823 / NBRC 15573 / CFN 42).